A 199-amino-acid chain; its full sequence is Large ribosomal subunit protein bL25 (199 aa).

This sequence belongs to the bacterial ribosomal protein bL25 family. CTC subfamily. As to quaternary structure, part of the 50S ribosomal subunit; part of the 5S rRNA/L5/L18/L25 subcomplex. Contacts the 5S rRNA. Binds to the 5S rRNA independently of L5 and L18.

Its function is as follows. This is one of the proteins that binds to the 5S RNA in the ribosome where it forms part of the central protuberance. The polypeptide is Large ribosomal subunit protein bL25 (Herpetosiphon aurantiacus (strain ATCC 23779 / DSM 785 / 114-95)).